A 729-amino-acid polypeptide reads, in one-letter code: Subtilisin-like protease SBT4.3 (729 aa).

A signal peptide spans 1 to 23 (MAKLSTPLYLICLAFIFTRDVSA). Residues 24–109 (NDYRQASSVY…VFPSKSHELT (86 aa)) constitute a propeptide, activation peptide. One can recognise an Inhibitor I9 domain in the interval 32–108 (VYIVYMGTLP…SVFPSKSHEL (77 aa)). A glycan (N-linked (GlcNAc...) asparagine) is linked at Asn82. Positions 113–580 (SWDFVGFGEK…SGQINPTKAS (468 aa)) constitute a Peptidase S8 domain. Active-site charge relay system residues include Asp139 and His196. N-linked (GlcNAc...) asparagine glycans are attached at residues Asn275, Asn348, Asn359, and Asn363. The PA domain maps to 350 to 436 (TKFPIVYGQN…LGFEDYKSIK (87 aa)). The active-site Charge relay system is Ser521. N-linked (GlcNAc...) asparagine glycans are attached at residues Asn614, Asn642, and Asn656.

Belongs to the peptidase S8 family. In terms of processing, the C-terminal propeptide is autocleaved.

It localises to the secreted. The sequence is that of Subtilisin-like protease SBT4.3 from Arabidopsis thaliana (Mouse-ear cress).